Reading from the N-terminus, the 408-residue chain is MVQVNENYLKLKAGYLFPEIAKRVKLYSQSNKNAEIIKLGIGDVTEPLPRACIEAMGKALDDMGTTDGFRGYGPEQGYAWLREKISEHDFISRGCQISPEEIFVSDGSKCDSSNILDILGKDNSIAVTDPVYPVYVDSNVMTGRTGDALENGTYQGLTYLAINEANNFLPELPEKKVDILYLCFPNNPTGATINKEELKKWVDYALQNKSLILFDAAYEAFIQDNDIPHSIYEIEGAKDCAIEFRSFSKNAGFTGVRCAFTVIPKNLKGLSSTNEEIELWPLWNRRQSTKFNGVSYVVQKGAEAVYSLEGKKQVRGLIDFYMENAKIMKNKLQNSGYKVYGGDNAPYIWIKVPDQMTSWDFFDFLLQKVSVVGTPGSGFGLAGEGYFRLSAFNSRSNVIDAMERIINI.

Positions 15 and 42 each coordinate substrate. Pyridoxal 5'-phosphate is bound by residues Y72, 108–109 (SK), Y132, N187, Y218, and 246–248 (SFS). K109, Y132, and N187 together coordinate substrate. N6-(pyridoxal phosphate)lysine is present on K249. R257 and N292 together coordinate pyridoxal 5'-phosphate. Substrate contacts are provided by N292 and R388.

Belongs to the class-I pyridoxal-phosphate-dependent aminotransferase family. LL-diaminopimelate aminotransferase subfamily. In terms of assembly, homodimer. It depends on pyridoxal 5'-phosphate as a cofactor.

It carries out the reaction (2S,6S)-2,6-diaminopimelate + 2-oxoglutarate = (S)-2,3,4,5-tetrahydrodipicolinate + L-glutamate + H2O + H(+). The protein operates within amino-acid biosynthesis; L-lysine biosynthesis via DAP pathway; LL-2,6-diaminopimelate from (S)-tetrahydrodipicolinate (aminotransferase route): step 1/1. Functionally, involved in the synthesis of meso-diaminopimelate (m-DAP or DL-DAP), required for both lysine and peptidoglycan biosynthesis. Catalyzes the direct conversion of tetrahydrodipicolinate to LL-diaminopimelate. In Prochlorococcus marinus (strain AS9601), this protein is LL-diaminopimelate aminotransferase.